We begin with the raw amino-acid sequence, 155 residues long: 6,7-dimethyl-8-ribityllumazine synthase (155 aa).

5-amino-6-(D-ribitylamino)uracil contacts are provided by residues F24, 58–60 (AFE), and 82–84 (AII). 87–88 (ST) contributes to the (2S)-2-hydroxy-3-oxobutyl phosphate binding site. The Proton donor role is filled by H90. F115 serves as a coordination point for 5-amino-6-(D-ribitylamino)uracil. R129 provides a ligand contact to (2S)-2-hydroxy-3-oxobutyl phosphate.

The protein belongs to the DMRL synthase family.

It catalyses the reaction (2S)-2-hydroxy-3-oxobutyl phosphate + 5-amino-6-(D-ribitylamino)uracil = 6,7-dimethyl-8-(1-D-ribityl)lumazine + phosphate + 2 H2O + H(+). It participates in cofactor biosynthesis; riboflavin biosynthesis; riboflavin from 2-hydroxy-3-oxobutyl phosphate and 5-amino-6-(D-ribitylamino)uracil: step 1/2. Functionally, catalyzes the formation of 6,7-dimethyl-8-ribityllumazine by condensation of 5-amino-6-(D-ribitylamino)uracil with 3,4-dihydroxy-2-butanone 4-phosphate. This is the penultimate step in the biosynthesis of riboflavin. This chain is 6,7-dimethyl-8-ribityllumazine synthase, found in Chlorobium phaeovibrioides (strain DSM 265 / 1930) (Prosthecochloris vibrioformis (strain DSM 265)).